Consider the following 316-residue polypeptide: UPF0613 protein PB24D3.06c (316 aa).

This sequence belongs to the UPF0613 family.

Its subcellular location is the cytoplasm. It is found in the nucleus. In Schizosaccharomyces pombe (strain 972 / ATCC 24843) (Fission yeast), this protein is UPF0613 protein PB24D3.06c.